The sequence spans 190 residues: MKCIVGLGNIGKRFELTRHNIGFEVVDYILEKNNFSLDKQKFKGAYTIERMNGDKVLFIEPMTMMNLSGEAVAPIMDYYNVNPEDLIVLYDDLDLEQGQVRLRQKGSAGGHNGMKSIIKMLGTDQFKRIRIGVGRPTNGMTVPDYVLQRFSNDEMVTMEKVIEHAARAIEKFVETSRFDHVMNEFNGEVK.

TRNA is bound at residue Phe-14. Catalysis depends on His-19, which acts as the Proton acceptor. 3 residues coordinate tRNA: Met-64, Asn-66, and Asn-112.

Belongs to the PTH family. Monomer.

Its subcellular location is the cytoplasm. The enzyme catalyses an N-acyl-L-alpha-aminoacyl-tRNA + H2O = an N-acyl-L-amino acid + a tRNA + H(+). In terms of biological role, hydrolyzes ribosome-free peptidyl-tRNAs (with 1 or more amino acids incorporated), which drop off the ribosome during protein synthesis, or as a result of ribosome stalling. Functionally, catalyzes the release of premature peptidyl moieties from peptidyl-tRNA molecules trapped in stalled 50S ribosomal subunits, and thus maintains levels of free tRNAs and 50S ribosomes. In Staphylococcus aureus (strain Mu3 / ATCC 700698), this protein is Peptidyl-tRNA hydrolase.